The chain runs to 65 residues: Small ribosomal subunit protein bS21 (65 aa).

Residues 43 to 52 (EKKRVKEALA) show a composition bias toward basic and acidic residues. Residues 43–65 (EKKRVKEALARKRSRKKARKEQD) are disordered. A compositionally biased stretch (basic residues) spans 53–65 (RKRSRKKARKEQD).

The protein belongs to the bacterial ribosomal protein bS21 family.

The chain is Small ribosomal subunit protein bS21 from Koribacter versatilis (strain Ellin345).